We begin with the raw amino-acid sequence, 918 residues long: Serine/threonine-protein kinase D1 (918 aa).

At Y93 the chain carries Phosphotyrosine. A Phorbol-ester/DAG-type 1 zinc finger spans residues 144–194 (PHALFVHSYRAPAFCDHCGEMLWGLVRQGLKCEGCGLNYHKRCAFKIPNNC). Phosphoserine occurs at positions 203, 206, 217, and 221. The Phorbol-ester/DAG-type 2 zinc-finger motif lies at 276 to 326 (PHTFVIHSYTRPTVCQFCKKLLKGLFRQGLQCKDCRFNCHKRCAPKVPNNC). Disordered regions lie at residues 338–362 (SPGA…NSGL) and 380–408 (EGQS…STSN). Acidic residues-rich tracts occupy residues 345–355 (VVMEEGSDDND) and 387–396 (EMQDPDADQE). S351 is subject to Phosphoserine. A phosphoserine; by MAPK13 mark is found at S403 and S407. The PH domain maps to 428–547 (TVMKEGWMVH…WEVAIQHALM (120 aa)). Y438 is modified (phosphotyrosine). Position 454 is a phosphoserine (S454). At Y469 the chain carries Phosphotyrosine; by ABL. At Y508 the chain carries Phosphotyrosine. Position 554 is a phosphoserine (S554). One can recognise a Protein kinase domain in the interval 589 to 845 (IFPDEVLGSG…VDKTLSHPWL (257 aa)). ATP contacts are provided by residues 595-603 (LGSGQFGIV) and K618. D712 functions as the Proton acceptor in the catalytic mechanism. S744 carries the post-translational modification Phosphoserine; by PKC/PRKCD. At S748 the chain carries Phosphoserine; by autocatalysis and PKC/PRKCD. Y755 is subject to Phosphotyrosine. S916 is subject to Phosphoserine; by autocatalysis.

Belongs to the protein kinase superfamily. CAMK Ser/Thr protein kinase family. PKD subfamily. Interacts (via N-terminus) with ADAP1/CENTA1. Interacts with MAPK13. Interacts with DAPK1 in an oxidative stress-regulated manner. Interacts with USP28; the interaction induces phosphorylation of USP28 and activated KRAS-mediated stabilization of ZNF304. Interacts with AKAP13 (via C-terminal domain). Requires Mg(2+) as cofactor. Post-translationally, phosphorylated at Ser-403 and Ser-407 by MAPK13 during regulation of insulin secretion in pancreatic beta cells. Phosphorylated by DAPK1. Phosphorylated at Tyr-93 and by ABL at Tyr-469, which primes the kinase in response to oxidative stress, and promotes a second step activating phosphorylation at Ser-744/Ser-748 by PKRD. Phosphorylated on Ser-916 upon S.enterica infection in macrophages.

Its subcellular location is the cytoplasm. It is found in the cell membrane. It localises to the golgi apparatus. The protein resides in the trans-Golgi network. The catalysed reaction is L-seryl-[protein] + ATP = O-phospho-L-seryl-[protein] + ADP + H(+). It catalyses the reaction L-threonyl-[protein] + ATP = O-phospho-L-threonyl-[protein] + ADP + H(+). Its activity is regulated as follows. Activated by DAG and phorbol esters. Phorbol-ester/DAG-type domain 1 binds DAG with high affinity and appears to play the dominant role in mediating translocation to the cell membrane and trans-Golgi network. Phorbol-ester/DAG-type domain 2 binds phorbol ester with higher affinity. Autophosphorylation of Ser-748 and phosphorylation of Ser-744 by PKC relieves auto-inhibition by the PH domain. Phosphorylation on Tyr-469 by the SRC-ABL1 pathway in response to oxidative stress, is also required for activation. Activated by DAPK1 under oxidative stress. Functionally, serine/threonine-protein kinase that converts transient diacylglycerol (DAG) signals into prolonged physiological effects downstream of PKC, and is involved in the regulation of MAPK8/JNK1 and Ras signaling, Golgi membrane integrity and trafficking, cell survival through NF-kappa-B activation, cell migration, cell differentiation by mediating HDAC7 nuclear export, cell proliferation via MAPK1/3 (ERK1/2) signaling, and plays a role in cardiac hypertrophy, VEGFA-induced angiogenesis, genotoxic-induced apoptosis and flagellin-stimulated inflammatory response. Phosphorylates the epidermal growth factor receptor (EGFR) on dual threonine residues, which leads to the suppression of epidermal growth factor (EGF)-induced MAPK8/JNK1 activation and subsequent JUN phosphorylation. Phosphorylates RIN1, inducing RIN1 binding to 14-3-3 proteins YWHAB, YWHAE and YWHAZ and increased competition with RAF1 for binding to GTP-bound form of Ras proteins (NRAS, HRAS and KRAS). Acts downstream of the heterotrimeric G-protein beta/gamma-subunit complex to maintain the structural integrity of the Golgi membranes, and is required for protein transport along the secretory pathway. In the trans-Golgi network (TGN), regulates the fission of transport vesicles that are on their way to the plasma membrane. May act by activating the lipid kinase phosphatidylinositol 4-kinase beta (PI4KB) at the TGN for the local synthesis of phosphorylated inositol lipids, which induces a sequential production of DAG, phosphatidic acid (PA) and lyso-PA (LPA) that are necessary for membrane fission and generation of specific transport carriers to the cell surface. Under oxidative stress, is phosphorylated at Tyr-469 via SRC-ABL1 and contributes to cell survival by activating IKK complex and subsequent nuclear translocation and activation of NFKB1. Involved in cell migration by regulating integrin alpha-5/beta-3 recycling and promoting its recruitment in newly forming focal adhesion. In osteoblast differentiation, mediates the bone morphogenetic protein 2 (BMP2)-induced nuclear export of HDAC7, which results in the inhibition of HDAC7 transcriptional repression of RUNX2. In neurons, plays an important role in neuronal polarity by regulating the biogenesis of TGN-derived dendritic vesicles, and is involved in the maintenance of dendritic arborization and Golgi structure in hippocampal cells. May potentiate mitogenesis induced by the neuropeptide bombesin or vasopressin by mediating an increase in the duration of MAPK1/3 (ERK1/2) signaling, which leads to accumulation of immediate-early gene products including FOS that stimulate cell cycle progression. Plays an important role in the proliferative response induced by low calcium in keratinocytes, through sustained activation of MAPK1/3 (ERK1/2) pathway. Downstream of novel PKC signaling, plays a role in cardiac hypertrophy by phosphorylating HDAC5, which in turn triggers XPO1/CRM1-dependent nuclear export of HDAC5, MEF2A transcriptional activation and induction of downstream target genes that promote myocyte hypertrophy and pathological cardiac remodeling. Mediates cardiac troponin I (TNNI3) phosphorylation at the PKA sites, which results in reduced myofilament calcium sensitivity, and accelerated crossbridge cycling kinetics. The PRKD1-HDAC5 pathway is also involved in angiogenesis by mediating VEGFA-induced specific subset of gene expression, cell migration, and tube formation. In response to VEGFA, is necessary and required for HDAC7 phosphorylation which induces HDAC7 nuclear export and endothelial cell proliferation and migration. During apoptosis induced by cytarabine and other genotoxic agents, PRKD1 is cleaved by caspase-3 at Asp-378, resulting in activation of its kinase function and increased sensitivity of cells to the cytotoxic effects of genotoxic agents. In epithelial cells, is required for transducing flagellin-stimulated inflammatory responses by binding and phosphorylating TLR5, which contributes to MAPK14/p38 activation and production of inflammatory cytokines. Acts as an activator of NLRP3 inflammasome assembly by mediating phosphorylation of NLRP3. May play a role in inflammatory response by mediating activation of NF-kappa-B. May be involved in pain transmission by directly modulating TRPV1 receptor. Plays a role in activated KRAS-mediated stabilization of ZNF304 in colorectal cancer (CRC) cells. Regulates nuclear translocation of transcription factor TFEB in macrophages upon live S.enterica infection. The polypeptide is Serine/threonine-protein kinase D1 (Prkd1) (Rattus norvegicus (Rat)).